We begin with the raw amino-acid sequence, 79 residues long: M-myrmicitoxin(01)-Tb1a (79 aa).

The signal sequence occupies residues 1–26 (MKLSFLSLVLAIILVMALMYTPHAEA). Residues 27–56 (KAWADADADATAAADADADAVADALADAVA) constitute a propeptide that is removed on maturation. At Val76 the chain carries Valine amide.

It belongs to the formicidae venom precursor-01 superfamily. The C-terminal amidation is important for antimicrobial activity, since a non-amidated synthetic peptide shows a reduced antimicrobial activity (2-20-fold depending on the strain tested). The amidation may play a positive role in the peptide conformation, since amidated peptide shows an increase of about 5% of helical content. Expressed by the venom gland.

It localises to the secreted. It is found in the target cell membrane. Its function is as follows. Antimicrobial peptide that shows antimicrobial activities against all microorganisms tested with minimal inhibitory concentrations (MICs) values ranging from 0.45 to 97.5 umol/L. This peptide kills the microorganisms by permeabilizating the membranes. It shows a very weak hemolytic activity (HC(50)=325 umol/L) and weak cytotoxicity against human lymphocytes (LC(50)=67.8 umol/L). Gram-negative bacteria tested are E.coli (MIC=24.4 umol/L), C.sakazakii (MIC=5.8 umol/L), P.aeruginosa (MIC=8.7-12.2 umol/L), S.enterica (MIC=5.4 umol/L), and H.pylori (MIC=0.99-3.9 umol/L). Gram-positive bacteria tested are E.hirae (MIC=12.2 umol/L), S.aureus (MIC=3.0-6.4 umol/L), methicillin-resistant S.aureus (MRSA) (MIC=8.7 umol/L), S.xylosus (MIC=0.45-1.3 umol/L), and B.subtilis (MIC=24.4 umol/L). Fungi tested are A.niger (MIC=0.75 umol/L), C.albicans (MIC=17.3 umol/L), G.candidum (MIC=97.5 umol/L), and S.cerevisiae (MIC=6.1 umol/L). Finally the parasite tested is L.infantum (MIC=1.5 umol/L). The polypeptide is M-myrmicitoxin(01)-Tb1a (Tetramorium bicarinatum (Tramp ant)).